The chain runs to 835 residues: Telomere length regulation protein TEL2 homolog (835 aa).

Disordered stretches follow at residues Ser455–Tyr501 and Leu629–Arg648. Residues Glu464–Lys473 are compositionally biased toward low complexity. Positions Ala474–Gln486 are enriched in basic and acidic residues. A compositionally biased stretch (acidic residues) spans Ser488–Ala499. Positions Glu636 to Arg648 are enriched in polar residues.

Belongs to the TEL2 family.

The protein resides in the cytoplasm. Its subcellular location is the membrane. The protein localises to the nucleus. It localises to the chromosome. It is found in the telomere. Regulator of the DNA damage response (DDR). Part of the TTT complex that is required to stabilize protein levels of the phosphatidylinositol 3-kinase-related protein kinase (PIKK) family proteins. Promotes assembly, stabilizes and maintains the activity of TORC complexes, which regulate cell growth and survival in response to nutrient and hormonal signals. May be involved in telomere length regulation. In Xenopus laevis (African clawed frog), this protein is Telomere length regulation protein TEL2 homolog (telo2).